Consider the following 124-residue polypeptide: Large ribosomal subunit protein bL12 (124 aa).

Belongs to the bacterial ribosomal protein bL12 family. As to quaternary structure, homodimer. Part of the ribosomal stalk of the 50S ribosomal subunit. Forms a multimeric L10(L12)X complex, where L10 forms an elongated spine to which 2 to 4 L12 dimers bind in a sequential fashion. Binds GTP-bound translation factors.

Forms part of the ribosomal stalk which helps the ribosome interact with GTP-bound translation factors. Is thus essential for accurate translation. This chain is Large ribosomal subunit protein bL12, found in Idiomarina loihiensis (strain ATCC BAA-735 / DSM 15497 / L2-TR).